Reading from the N-terminus, the 511-residue chain is MRIGPVELSAVKDWDPAPGVLVSWHPTPASCAKALAAPVSAVPPSYVQARQIRSFSEQAARGLDHSRLLIASVEVFGHCDLRAMTYVINAHLRRHDTYRSWFELRDTDHIVRHSIADPADIEFVPTTHGEMTSADLRQHIVATPDSLHWDCFSFGVIQRADSFTFYASIDHLHADGQFVGVGLMEFQSMYTALIMGEPPIGLSEAGSYVDFCVRQHEYTSALTVDSPEVRAWIDFAEINNGTFPEFPLPLGDPSVRCGGDLLSMMLMDEQQTQRFESACMAANARFIGGMLACIAIAIHELTGADTYFGITPKDIRTPADLMTQGWFTGQIPVTVPVAGLSFNEIARIAQTSFDTGADLAKVPFERVVELSPSLRRPQPLFSLVNFFDAQVGPLSAVTKLFEGLNVGTYSDGRVTYPLSTMVGRFDETAASVLFPDNPVARESVTAYLRAIRSVCMRIANGGTAERVGNVVALSPGRRNNIERMTWRSCRAGDFIDICNLKVANVTVDREA.

This sequence belongs to the PapA acyltransferase family.

The catalysed reaction is a (hydroxy)phthioceranyl-[(hydroxy)phthioceranic acid synthase] + 2'-palmitoyl/stearoyl-2-O-sulfo-alpha,alpha-trehalose = a 3'-(hydroxy)phthioceranyl-2'-palmitoyl/stearoyl-2-O-sulfo-alpha,alpha-trehalose + holo-[(hydroxy)phthioceranic acid synthase].. Functionally, catalyzes the acylation of trehalose-2-sulfate-2'-palmitate (SL659) by adding the (hydroxy)phthioceranoyl group at the 3'-position to yield the diacylated intermediate 2-palmitoyl-3-(C43)-phthioceranyl-alpha, alpha'-D-trehalose-2'-sulfate (SL1278). The sequence is that of 2'-acyl-2-O-sulfo-trehalose (hydroxy)phthioceranyltransferase PapA1 (papA1) from Mycobacterium bovis (strain BCG / Pasteur 1173P2).